The following is a 308-amino-acid chain: Methionyl-tRNA formyltransferase (308 aa).

110-113 serves as a coordination point for (6S)-5,6,7,8-tetrahydrofolate; that stretch reads SLLP.

Belongs to the Fmt family.

It catalyses the reaction L-methionyl-tRNA(fMet) + (6R)-10-formyltetrahydrofolate = N-formyl-L-methionyl-tRNA(fMet) + (6S)-5,6,7,8-tetrahydrofolate + H(+). Attaches a formyl group to the free amino group of methionyl-tRNA(fMet). The formyl group appears to play a dual role in the initiator identity of N-formylmethionyl-tRNA by promoting its recognition by IF2 and preventing the misappropriation of this tRNA by the elongation apparatus. This chain is Methionyl-tRNA formyltransferase, found in Mycobacterium sp. (strain KMS).